The primary structure comprises 285 residues: Putative sugar uptake protein lp_2503 (285 aa).

9 helical membrane-spanning segments follow: residues 2–21, 31–48, 55–72, 112–134, 147–169, 179–196, 209–228, 233–255, and 264–283; these read GILIALIPAIAWGSIGLISG, TLGMTMGALVFGLALWAV, SKIWLIGIVSGLFWSIGQ, GNMYWIGSASVIVLIAGAVLTSL, NWGVGIRALILSTIGYAGYTIVV, VVMPQAVGMLLGALIWSF, NIVTGLVWGIGNLFMFMAMA, AVAYSLSQMGIVISTFGSIYLLG, and VYVVIGSILVIVGGVALSLM.

The protein belongs to the GRP transporter (TC 2.A.7.5) family.

Its subcellular location is the cell membrane. The sequence is that of Putative sugar uptake protein lp_2503 from Lactiplantibacillus plantarum (strain ATCC BAA-793 / NCIMB 8826 / WCFS1) (Lactobacillus plantarum).